Consider the following 202-residue polypeptide: Endoribonuclease YbeY (202 aa).

Positions 120, 124, and 130 each coordinate Zn(2+).

This sequence belongs to the endoribonuclease YbeY family. Zn(2+) is required as a cofactor.

The protein resides in the cytoplasm. In terms of biological role, single strand-specific metallo-endoribonuclease involved in late-stage 70S ribosome quality control and in maturation of the 3' terminus of the 16S rRNA. This Corynebacterium kroppenstedtii (strain DSM 44385 / JCM 11950 / CIP 105744 / CCUG 35717) protein is Endoribonuclease YbeY.